Consider the following 250-residue polypeptide: ATP synthase subunit a (250 aa).

The next 6 helical transmembrane spans lie at 26-46 (FTNASLFMVATVGAAAGFLYL), 84-104 (FFPMVFSLFMFILTANLLGMV), 114-134 (IIVTFALAVFVIGTVILYGFY), 143-163 (LFVPHGVPGALLPLVVAIEII), 193-213 (FVASLSAFGALGIGGAILPLI), and 216-236 (VALTGLEFLVAFLQAYVFAVL).

The protein belongs to the ATPase A chain family. As to quaternary structure, F-type ATPases have 2 components, CF(1) - the catalytic core - and CF(0) - the membrane proton channel. CF(1) has five subunits: alpha(3), beta(3), gamma(1), delta(1), epsilon(1). CF(0) has three main subunits: a(1), b(2) and c(9-12). The alpha and beta chains form an alternating ring which encloses part of the gamma chain. CF(1) is attached to CF(0) by a central stalk formed by the gamma and epsilon chains, while a peripheral stalk is formed by the delta and b chains.

The protein localises to the cell inner membrane. Functionally, key component of the proton channel; it plays a direct role in the translocation of protons across the membrane. This is ATP synthase subunit a from Sinorhizobium medicae (strain WSM419) (Ensifer medicae).